Reading from the N-terminus, the 485-residue chain is MAAVFDLDLETEEGSEGEGEPEFSPADVCPLGELRAAGLETVGHYEEVELTESSVNLGPERIGPHCFELLSVLGKGGYGKVFQVRKVQGTNLGKIYAMKVLRKAKIVCSAKDTAHTRAERNILESVKHPFIVELAYAFQTGGKLYLILECLSGGELFTHLEREGIFLEDTACFYLAEITLALGHLHSHGIIYRDLKPENIMLSSQGHIKLTDFGLCKESIHEGAITHTFCGTIEYMAPEILVRTGHNRAVDWWSLGALMYDMLTGSPPFTAENRKKTMDKIIKGKLVLPPYLTPDARDLAKKFLKRNPTQRIGGGLGDAADVQRHPFFRHINWDDLLARRVDPPFRPSLQSEEDVSQFDARFTRQTPVDSPDDTALSESANQAFLGFTYVAPSVLDSIKEGFSFQPKLRSPRRLNSSPRTPISPLKFSPFEGFRPSPGPPEPMEPSLPPLLPSPPSPPPTSTAPLPIRPPSGTKKSKKGRGRSGR.

Residues 1–26 form a disordered region; it reads MAAVFDLDLETEEGSEGEGEPEFSPA. The segment covering 7–21 has biased composition (acidic residues); the sequence is LDLETEEGSEGEGEP. S15 bears the Phosphoserine mark. Residues 67 to 328 enclose the Protein kinase domain; the sequence is FELLSVLGKG…AADVQRHPFF (262 aa). ATP contacts are provided by residues 73-81 and K99; that span reads LGKGGYGKV. D194 functions as the Proton acceptor in the catalytic mechanism. The region spanning 329 to 399 is the AGC-kinase C-terminal domain; the sequence is RHINWDDLLA…VAPSVLDSIK (71 aa). The disordered stretch occupies residues 407–485; that stretch reads KLRSPRRLNS…SKKGRGRSGR (79 aa). S417 carries the post-translational modification Phosphoserine. The residue at position 420 (T420) is a Phosphothreonine. Residue S423 is modified to Phosphoserine. The span at 436 to 469 shows a compositional bias: pro residues; it reads SPGPPEPMEPSLPPLLPSPPSPPPTSTAPLPIRP. The Nuclear localization signal signature appears at 474–480; the sequence is KKSKKGR. The segment covering 474–485 has biased composition (basic residues); that stretch reads KKSKKGRGRSGR. A Phosphoserine; by PKC modification is found at S476.

It belongs to the protein kinase superfamily. AGC Ser/Thr protein kinase family. S6 kinase subfamily. In terms of processing, phosphorylated and activated by MTOR. Phosphorylation by PKC within the NLS in response to mitogenic stimuli causes cytoplasmic retention.

It localises to the cytoplasm. Its subcellular location is the nucleus. It catalyses the reaction L-seryl-[protein] + ATP = O-phospho-L-seryl-[protein] + ADP + H(+). The enzyme catalyses L-threonyl-[protein] + ATP = O-phospho-L-threonyl-[protein] + ADP + H(+). Its function is as follows. Phosphorylates specifically ribosomal protein S6. Seems to act downstream of mTOR signaling in response to growth factors and nutrients to promote cell proliferation, cell growth and cell cycle progression in an alternative pathway regulated by MEAK7. The chain is Ribosomal protein S6 kinase beta-2 (Rps6kb2) from Mus musculus (Mouse).